The sequence spans 438 residues: Adenosylhomocysteinase (438 aa).

3 residues coordinate substrate: threonine 61, aspartate 137, and glutamate 162. Position 163 to 165 (163 to 165) interacts with NAD(+); that stretch reads TTT. Residues lysine 192 and aspartate 196 each contribute to the substrate site. NAD(+) is bound by residues asparagine 197, 226–231, glutamate 249, asparagine 284, 305–307, and asparagine 352; these read GYGDVG and IGH.

Belongs to the adenosylhomocysteinase family. NAD(+) is required as a cofactor.

The protein resides in the cytoplasm. It catalyses the reaction S-adenosyl-L-homocysteine + H2O = L-homocysteine + adenosine. The protein operates within amino-acid biosynthesis; L-homocysteine biosynthesis; L-homocysteine from S-adenosyl-L-homocysteine: step 1/1. Functionally, may play a key role in the regulation of the intracellular concentration of adenosylhomocysteine. The sequence is that of Adenosylhomocysteinase from Christiangramia forsetii (strain DSM 17595 / CGMCC 1.15422 / KT0803) (Gramella forsetii).